A 185-amino-acid chain; its full sequence is MISVNDFKTGLTISVDNGIWKVIDFQHVKPGKGSAFVRSKLRNLRTGAIQEKTFRAGEKVEQAMIENRRMQYLYADGDNHVFMDNETFDQIELPGDYLKDELNYLKANMEVQVQSYESEVIGVELPKTVELEVTETEPGIKGDTATGATKSATVETGYTLNVPLFVNEGDTLVINTSDGSYISRG.

Belongs to the elongation factor P family.

It localises to the cytoplasm. It functions in the pathway protein biosynthesis; polypeptide chain elongation. Functionally, involved in peptide bond synthesis. Stimulates efficient translation and peptide-bond synthesis on native or reconstituted 70S ribosomes in vitro. Probably functions indirectly by altering the affinity of the ribosome for aminoacyl-tRNA, thus increasing their reactivity as acceptors for peptidyl transferase. This Staphylococcus epidermidis (strain ATCC 35984 / DSM 28319 / BCRC 17069 / CCUG 31568 / BM 3577 / RP62A) protein is Elongation factor P.